The sequence spans 1410 residues: SNF2 domain-containing protein CLASSY 3 (1410 aa).

Basic residues predominate over residues 1-12 (MECIGKRVKSRS). 6 disordered regions span residues 1–74 (MECI…SVPN), 87–108 (DLNV…SEQN), 209–330 (GEIE…PIKR), 344–376 (RSGS…QREV), 428–593 (NVSK…LKDK), and 632–654 (EDEA…REDH). A Nuclear localization signal 1 motif is present at residues 22–29 (RKKMETVA). The span at 95 to 108 (GPSSSRLTDGSEQN) shows a compositional bias: polar residues. Residues 245 to 266 (SDGEDSSSETDEEEEENQDSED) show a composition bias toward acidic residues. Positions 248-278 (EDSSSETDEEEEENQDSEDNNTKDNVTVESL) form a coiled coil. Residues 276–301 (ESLSSEDPSSSSSSSSSSSSSSSSSS) show a composition bias toward low complexity. Residues 306–323 (SYVKEVVGDNRDDDDLRK) show a composition bias toward basic and acidic residues. The short motif at 328-335 (IKRVSLVE) is the Nuclear localization signal 2 element. The span at 351 to 376 (KPRERDNKIQKLNHREEEKKERQREV) shows a compositional bias: basic and acidic residues. Residues 356-377 (DNKIQKLNHREEEKKERQREVV) are a coiled coil. The segment covering 428–446 (NVSKYEDSVSINSGKTTGA) has biased composition (polar residues). Basic and acidic residues-rich tracts occupy residues 450–463 (PEVE…ELNT) and 488–504 (EPSR…KEVQ). The segment covering 576 to 587 (SSISSGDGYESD) has biased composition (low complexity). Residues 850–1060 (FENSDETGGC…CNVLGLARPK (211 aa)) form the Helicase ATP-binding domain. An ATP-binding site is contributed by 863-870 (HAPGTGKT). Residues 1011–1014 (DEAH) carry the DEAH box motif. The Nuclear localization signal 3 motif lies at 1132 to 1139 (QRRVLESI). Residues 1206 to 1359 (EFVELCEVIK…ELVFACSSRH (154 aa)) form the Helicase C-terminal domain.

Belongs to the SNF2/RAD54 helicase family. In terms of assembly, interacts with NRPD1.

It localises to the nucleus. Functionally, probable chromatin remodeling factor. The chain is SNF2 domain-containing protein CLASSY 3 (CLSY3) from Arabidopsis thaliana (Mouse-ear cress).